The following is a 170-amino-acid chain: Adenine phosphoribosyltransferase (170 aa).

It belongs to the purine/pyrimidine phosphoribosyltransferase family. Homodimer.

The protein resides in the cytoplasm. It carries out the reaction AMP + diphosphate = 5-phospho-alpha-D-ribose 1-diphosphate + adenine. The protein operates within purine metabolism; AMP biosynthesis via salvage pathway; AMP from adenine: step 1/1. Functionally, catalyzes a salvage reaction resulting in the formation of AMP, that is energically less costly than de novo synthesis. The sequence is that of Adenine phosphoribosyltransferase from Carboxydothermus hydrogenoformans (strain ATCC BAA-161 / DSM 6008 / Z-2901).